The chain runs to 537 residues: 5,6-dihydroxyindole-2-carboxylic acid oxidase (537 aa).

The signal sequence occupies residues 1–24 (MKSYNVLPLAYISLFLMLFYQVWA). The Lumenal, melanosome segment spans residues 25–477 (QFPRECANIE…WPGQEFTVSE (453 aa)). Intrachain disulfides connect C30/C41, C42/C65, C56/C99, C101/C110, and C113/C122. N-linked (GlcNAc...) asparagine glycosylation is found at N96 and N104. N181 carries an N-linked (GlcNAc...) asparagine glycan. Residues H192, H215, and H224 each contribute to the Zn(2+) site. 2 cysteine pairs are disulfide-bonded: C258–C261 and C290–C303. 2 N-linked (GlcNAc...) asparagine glycosylation sites follow: N304 and N350. Residues H377 and H381 each coordinate Zn(2+). An N-linked (GlcNAc...) asparagine glycan is attached at N385. Zn(2+) is bound at residue H404. A helical membrane pass occupies residues 478 to 501 (IITIAVVAALLLVAAIFGVASCLI). The Cytoplasmic segment spans residues 502 to 537 (RSRSTKNEANQPLLTDHYQRYAEDYEELPNPNHSMV).

Belongs to the tyrosinase family. As to quaternary structure, monomer. Interacts with ATP7A. Interacts with SLC45A2. The cofactor is Cu(2+). Zn(2+) serves as cofactor. Post-translationally, glycosylated. Pigment cells.

The protein resides in the melanosome membrane. It catalyses the reaction 2 5,6-dihydroxyindole-2-carboxylate + O2 = 2 indole-5,6-quinone-2-carboxylate + 2 H2O. It participates in pigment biosynthesis; melanin biosynthesis. In terms of biological role, plays a role in melanin biosynthesis. Catalyzes the oxidation of 5,6-dihydroxyindole-2-carboxylic acid (DHICA) into indole-5,6-quinone-2-carboxylic acid. May regulate or influence the type of melanin synthesized. Also to a lower extent, capable of hydroxylating tyrosine and producing melanin. This Mus musculus (Mouse) protein is 5,6-dihydroxyindole-2-carboxylic acid oxidase (Tyrp1).